We begin with the raw amino-acid sequence, 123 residues long: UPF0102 protein APJL_1381 (123 aa).

This sequence belongs to the UPF0102 family.

The chain is UPF0102 protein APJL_1381 from Actinobacillus pleuropneumoniae serotype 3 (strain JL03).